The chain runs to 1287 residues: DNA-directed RNA polymerase subunit beta (1287 aa).

The protein belongs to the RNA polymerase beta chain family. The RNAP catalytic core consists of 2 alpha, 1 beta, 1 beta' and 1 omega subunit. When a sigma factor is associated with the core the holoenzyme is formed, which can initiate transcription.

It catalyses the reaction RNA(n) + a ribonucleoside 5'-triphosphate = RNA(n+1) + diphosphate. In terms of biological role, DNA-dependent RNA polymerase catalyzes the transcription of DNA into RNA using the four ribonucleoside triphosphates as substrates. This chain is DNA-directed RNA polymerase subunit beta, found in Mycoplasma capricolum subsp. capricolum (strain California kid / ATCC 27343 / NCTC 10154).